Here is a 521-residue protein sequence, read N- to C-terminus: GMP synthase [glutamine-hydrolyzing] (521 aa).

A Glutamine amidotransferase type-1 domain is found at 5–197 (KILILDFGSQ…VLDICGAQPG (193 aa)). Cysteine 81 functions as the Nucleophile in the catalytic mechanism. Catalysis depends on residues histidine 171 and glutamate 173. The 193-residue stretch at 198 to 390 (WTMPNYIEEA…LGLPREMVYR (193 aa)) folds into the GMPS ATP-PPase domain. 225 to 231 (SGGVDSS) is a binding site for ATP.

In terms of assembly, homodimer.

It carries out the reaction XMP + L-glutamine + ATP + H2O = GMP + L-glutamate + AMP + diphosphate + 2 H(+). The protein operates within purine metabolism; GMP biosynthesis; GMP from XMP (L-Gln route): step 1/1. Its function is as follows. Catalyzes the synthesis of GMP from XMP. This is GMP synthase [glutamine-hydrolyzing] from Neisseria meningitidis serogroup C (strain 053442).